An 827-amino-acid chain; its full sequence is Glycerol-3-phosphate acyltransferase (827 aa).

An HXXXXD motif motif is present at residues 325-330 (CHRSHM).

This sequence belongs to the GPAT/DAPAT family.

The protein resides in the cell inner membrane. It carries out the reaction sn-glycerol 3-phosphate + an acyl-CoA = a 1-acyl-sn-glycero-3-phosphate + CoA. It participates in phospholipid metabolism; CDP-diacylglycerol biosynthesis; CDP-diacylglycerol from sn-glycerol 3-phosphate: step 1/3. This Shigella sonnei (strain Ss046) protein is Glycerol-3-phosphate acyltransferase.